The chain runs to 1648 residues: Pleiotropic ABC efflux transporter of multiple drugs YBT1 (1648 aa).

Residues 28–48 form a helical membrane-spanning segment; the sequence is NYVPTTLVTISILILLHNFFI. N-linked (GlcNAc...) asparagine glycosylation is present at N72. Transmembrane regions (helical) follow at residues 140–160, 175–195, 207–227, and 250–270; these read VVIE…LSIE, PHVL…LNLN, NIWL…ILPF, and LNLV…LPVL. N306 is a glycosylation site (N-linked (GlcNAc...) asparagine). The next 2 membrane-spanning stretches (helical) occupy residues 352–372 and 392–412; these read FLNL…SIFV and MNLA…VAIC. The 314-residue stretch at 361–674 folds into the ABC transmembrane type-1 1 domain; it reads CFTTISAFSI…ISDMLSYLIQ (314 aa). An N-linked (GlcNAc...) asparagine glycan is attached at N471. 2 consecutive transmembrane segments (helical) span residues 501–521 and 523–543; these read ISEL…LTVS and ILLY…TIII. N573 carries an N-linked (GlcNAc...) asparagine glycan. Transmembrane regions (helical) follow at residues 612–632 and 643–662; these read VWCV…GCTF and LTTP…RDPL. One can recognise an ABC transporter 1 domain in the interval 706–947; it reads LAFENVTLRW…GLLGEDENMK (242 aa). N-linked (GlcNAc...) asparagine glycosylation occurs at N710. 741 to 748 lines the ATP pocket; it reads GATGSGKT. N784 and N798 each carry an N-linked (GlcNAc...) asparagine glycan. A helical transmembrane segment spans residues 1012–1032; the sequence is MYGGWYTIVALASVFTAILCL. The ABC transmembrane type-1 2 domain maps to 1032 to 1333; it reads LQITQAWWIR…LVRQYSELEM (302 aa). N1042 is a glycosylation site (N-linked (GlcNAc...) asparagine). 3 helical membrane passes run 1089–1109, 1168–1188, and 1191–1211; these read IAKF…IGSI, IQSV…ISYI, and AFFP…FFYL. N-linked (GlcNAc...) asparagine glycosylation occurs at N1255. 2 consecutive transmembrane segments (helical) span residues 1282 to 1302 and 1305 to 1325; these read LIGA…INNI and GLAG…LWLV. The ABC transporter 2 domain occupies 1372–1622; it reads VEVNNLSLKY…KKSIFYNMCE (251 aa). Residue N1376 is glycosylated (N-linked (GlcNAc...) asparagine). 1406 to 1413 lines the ATP pocket; sequence GRTGAGKS. N1503, N1524, and N1573 each carry an N-linked (GlcNAc...) asparagine glycan.

This sequence belongs to the ABC transporter superfamily. ABCC family. Conjugate transporter (TC 3.A.1.208) subfamily.

Its subcellular location is the membrane. Pleiotropic ABC efflux transporter that might be involved in the resistance to azoles such as fluconazole. This is Pleiotropic ABC efflux transporter of multiple drugs YBT1 from Candida glabrata (strain ATCC 2001 / BCRC 20586 / JCM 3761 / NBRC 0622 / NRRL Y-65 / CBS 138) (Yeast).